A 364-amino-acid chain; its full sequence is Chorismate synthase (364 aa).

Arg-48 and Arg-54 together coordinate NADP(+). Residues 125–127 (RSS), 238–239 (NA), Gly-278, 293–297 (KPTSS), and Arg-319 contribute to the FMN site.

Belongs to the chorismate synthase family. In terms of assembly, homotetramer. FMNH2 is required as a cofactor.

The enzyme catalyses 5-O-(1-carboxyvinyl)-3-phosphoshikimate = chorismate + phosphate. Its pathway is metabolic intermediate biosynthesis; chorismate biosynthesis; chorismate from D-erythrose 4-phosphate and phosphoenolpyruvate: step 7/7. In terms of biological role, catalyzes the anti-1,4-elimination of the C-3 phosphate and the C-6 proR hydrogen from 5-enolpyruvylshikimate-3-phosphate (EPSP) to yield chorismate, which is the branch point compound that serves as the starting substrate for the three terminal pathways of aromatic amino acid biosynthesis. This reaction introduces a second double bond into the aromatic ring system. This chain is Chorismate synthase, found in Shewanella loihica (strain ATCC BAA-1088 / PV-4).